We begin with the raw amino-acid sequence, 546 residues long: MLPRLYRSVAVGLPRAIRAKSTPLRLCIQACSSSDSLKPQHPSLTFSDDNSRTRGWKVMGTLIGLGAVLAYHDHRCRASQESPRIYSKEDVRSHNNLKTGVWVTLGSEVFDVTKFVDLHPGGQSKLMLAAGGPLEPFWALYAVHNQPHVRELLAEYKIGELNPEDRMSPPLEASDPYSNDPMRHPALRINSQRPFNAEPPPELLTESYITPNPIFFTRNHLPVPNLDPDTYRLHVVGAPGGQSLSLSLDDLHKFPKHEVTVTLQCAGNRRSEMNKVKEVKGLEWRTGAISTARWAGARLCDVLAQAGHRLRETEAHVCFEGLDSDPTGTAYGASIPLARAMDPQAEVLLAYEMNGQPLPRDHGFPVRVVVPGVVGARHVKWLGRVSVESEESYSHWQRRDYKGFSPSVDWDTVDFDLAPSIQELPIQSAITQPQDGTTVESGEVIIKGYAWSGGGRAVIRVDVSMDGGLTWQEAELEGEEQHPRKAWAWRIWQLKAHVPAEQKELNIICKAVDDSYNVQPDTVAPIWNLRGVLSNAWHRVHVQVVP.

A mitochondrion-targeting transit peptide spans 1–80 (MLPRLYRSVA…YHDHRCRASQ (80 aa)). The Cytochrome b5 heme-binding domain occupies 83–162 (PRIYSKEDVR…LAEYKIGELN (80 aa)). H119 contributes to the heme b binding site. Residue S124 is modified to Phosphoserine. Heme b-binding residues include H144, Q146, and H148. The interval 166–175 (RMSPPLEASD) is hinge. The moco domain stretch occupies residues 176–402 (PYSNDPMRHP…YSHWQRRDYK (227 aa)). Residues 216–220 (FTRNH), C265, D323, H362, R367, and 378–380 (HVK) contribute to the Mo-molybdopterin site. The interval 403 to 539 (GFSPSVDWDT…RGVLSNAWHR (137 aa)) is homodimerization.

Homodimer. Heme b is required as a cofactor. It depends on Mo-molybdopterin as a cofactor.

The protein resides in the mitochondrion intermembrane space. The enzyme catalyses sulfite + O2 + H2O = sulfate + H2O2. It participates in energy metabolism; sulfur metabolism. In terms of biological role, catalyzes the oxidation of sulfite to sulfate, the terminal reaction in the oxidative degradation of sulfur-containing amino acids. The chain is Sulfite oxidase, mitochondrial from Rattus norvegicus (Rat).